The primary structure comprises 514 residues: F-box-like/WD repeat-containing protein TBL1XR1 (514 aa).

S2 is modified (N-acetylserine). Residues 4–36 (SSDEVNFLVYRYLQESGFSHSAFTFGIESHISQ) form the LisH domain. The F-box-like domain occupies 41-86 (GALVPPAALISIIQKGLQYVEAEVSINEDGTLFDGRPIESLSLIDA). Position 102 is an N6-acetyllysine (K102). Residues 114–139 (AAAATNQQGSAKNGENTANGEENGAH) form a disordered region. A compositionally biased stretch (low complexity) spans 124-135 (AKNGENTANGEE). 8 WD repeats span residues 167-206 (GHES…TSGP), 223-262 (PSNK…ASTL), 264-303 (QHKG…AKQQ), 306-344 (FHSA…PIKT), 347-386 (GHTN…CVHD), 389-437 (AHNK…CIHT), 440-479 (KHQE…LVHS), and 481-513 (RGTG…LDLR). K277 is covalently cross-linked (Glycyl lysine isopeptide (Lys-Gly) (interchain with G-Cter in SUMO2)).

Belongs to the WD repeat EBI family. As to quaternary structure, component of the N-Cor repressor complex, at least composed of NCOR1, NCOR2, HDAC3, TBL1X, TBL1XR1, CORO2A and GPS2. Probable component of some E3 ubiquitin ligase complex. Interacts with histones H2B and H4. Interacts with MECP2; bridges interaction between MECP2 and NCOR1. Interacts with USP44.

Its subcellular location is the nucleus. Its function is as follows. F-box-like protein involved in the recruitment of the ubiquitin/19S proteasome complex to nuclear receptor-regulated transcription units. Plays an essential role in transcription activation mediated by nuclear receptors. Probably acts as integral component of the N-Cor corepressor complex that mediates the recruitment of the 19S proteasome complex, leading to the subsequent proteasomal degradation of N-Cor complex, thereby allowing cofactor exchange, and transcription activation. The chain is F-box-like/WD repeat-containing protein TBL1XR1 (Tbl1xr1) from Mus musculus (Mouse).